Consider the following 334-residue polypeptide: Ribosomal RNA small subunit methyltransferase H (334 aa).

Positions 1 to 21 are disordered; the sequence is MNALPIRTAAPSGHSGGHSST. Residues 52-54, aspartate 71, phenylalanine 98, aspartate 119, and glutamine 126 contribute to the S-adenosyl-L-methionine site; that span reads GGY.

The protein belongs to the methyltransferase superfamily. RsmH family.

It is found in the cytoplasm. The enzyme catalyses cytidine(1402) in 16S rRNA + S-adenosyl-L-methionine = N(4)-methylcytidine(1402) in 16S rRNA + S-adenosyl-L-homocysteine + H(+). Its function is as follows. Specifically methylates the N4 position of cytidine in position 1402 (C1402) of 16S rRNA. The chain is Ribosomal RNA small subunit methyltransferase H from Granulibacter bethesdensis (strain ATCC BAA-1260 / CGDNIH1).